The following is a 145-amino-acid chain: Deoxyuridine 5'-triphosphate nucleotidohydrolase (145 aa).

Substrate-binding positions include 63-65 (RSG), N76, and 80-82 (TID).

This sequence belongs to the dUTPase family. Mg(2+) is required as a cofactor.

It carries out the reaction dUTP + H2O = dUMP + diphosphate + H(+). Its pathway is pyrimidine metabolism; dUMP biosynthesis; dUMP from dCTP (dUTP route): step 2/2. This enzyme is involved in nucleotide metabolism: it produces dUMP, the immediate precursor of thymidine nucleotides and it decreases the intracellular concentration of dUTP so that uracil cannot be incorporated into DNA. This chain is Deoxyuridine 5'-triphosphate nucleotidohydrolase, found in Chlamydia pneumoniae (Chlamydophila pneumoniae).